Here is a 266-residue protein sequence, read N- to C-terminus: Glucosamine-6-phosphate deaminase (266 aa).

The active-site Proton acceptor; for enolization step is aspartate 67. The active-site For ring-opening step is asparagine 139. Histidine 141 (proton acceptor; for ring-opening step) is an active-site residue. Glutamate 146 acts as the For ring-opening step in catalysis.

The protein belongs to the glucosamine/galactosamine-6-phosphate isomerase family. NagB subfamily. In terms of assembly, homohexamer.

It carries out the reaction alpha-D-glucosamine 6-phosphate + H2O = beta-D-fructose 6-phosphate + NH4(+). The protein operates within amino-sugar metabolism; N-acetylneuraminate degradation; D-fructose 6-phosphate from N-acetylneuraminate: step 5/5. Catalyzes the reversible isomerization-deamination of glucosamine 6-phosphate (GlcN6P) to form fructose 6-phosphate (Fru6P) and ammonium ion. The chain is Glucosamine-6-phosphate deaminase from Marinomonas sp. (strain MWYL1).